Here is a 268-residue protein sequence, read N- to C-terminus: Tropinone reductase homolog At2g29170 (268 aa).

NADP(+) is bound at residue 22-46; it reads LVTGGSKGLGEAVVEELAMLGARVH. S155 serves as a coordination point for substrate. The active-site Proton acceptor is the Y168.

Belongs to the short-chain dehydrogenases/reductases (SDR) family. SDR65C subfamily.

In Arabidopsis thaliana (Mouse-ear cress), this protein is Tropinone reductase homolog At2g29170.